The chain runs to 191 residues: Salivary lipocalin (191 aa).

Residues 1–16 form the signal peptide; the sequence is MKLLLLLCLGLTLASS. A glycan (N-linked (GlcNAc...) asparagine) is linked at Asn69. Cys84 and Cys176 form a disulfide bridge.

It belongs to the calycin superfamily. Lipocalin family. In terms of assembly, homodimer. In the submaxillary salivary glands of mature male pigs, but absent from that of females. Expression was much lower in submaxillary glands of castrated male pigs than in sexually mature individuals.

The protein localises to the secreted. Functionally, binds pheromones, the pheromones are released from the saliva of males and affect the sexual behavior of females. This is Salivary lipocalin (SAL1) from Sus scrofa (Pig).